Reading from the N-terminus, the 1595-residue chain is Collagen-like protein 2 (1595 aa).

2 N-linked (GlcNAc...) asparagine; by host glycosylation sites follow: asparagine 87 and asparagine 134. Collagen-like domains follow at residues 97-155, 175-233, 236-295, and 299-358; these read LRGE…NGDV, QVGL…KGEG, GSKG…KGDI, and GIKG…KGMK. Residues 181-190 show a composition bias toward low complexity; sequence SQGDQGYKGD. Disordered regions lie at residues 181–577 and 604–1326; these read SQGD…SPDL and TDIK…GIKG. Basic and acidic residues-rich tracts occupy residues 191-200, 209-448, 456-466, 474-501, 510-561, 606-615, 622-702, 718-825, 832-883, 895-1041, 1048-1098, 1107-1151, 1159-1250, and 1265-1300; these read QGSKGDKGQK, KGDK…KGTK, YKGDIGDKGIK, DKGDKGIKGDKGDKGIKGDDGSKGDKGY, DNGE…DKGE, IKGEKGDKGE, KGDK…DKGD, KGDK…DKGI, KGDK…KGFK, KGNK…DQGT, KGDK…KGIK, NKGD…KGDQ, and KGDKGDKGDKGDKGDKGDKGAKGDKGDKGDKGDQGI. N-linked (GlcNAc...) asparagine; by host glycosylation is found at asparagine 274, asparagine 280, and asparagine 286. N-linked (GlcNAc...) asparagine; by host glycosylation is found at asparagine 373, asparagine 382, asparagine 400, and asparagine 409. 5 consecutive Collagen-like domains span residues 380-559, 608-907, 920-1039, 1043-1102, and 1128-1307; these read GDNG…KGDK, GEKG…KGEN, GDKG…KGDK, GTNG…KGET, and GDQG…SGAS. Asparagine 1345, asparagine 1420, and asparagine 1545 each carry an N-linked (GlcNAc...) asparagine; by host glycan. A disordered region spans residues 1538 to 1585; the sequence is SAFDKGGNGSIRFNPPSSGTKGSGGGGSVQGGGGTIPNDGYPGGNGGP. Residues 1558-1585 show a composition bias toward gly residues; that stretch reads KGSGGGGSVQGGGGTIPNDGYPGGNGGP.

Post-translationally, may be hydroxylated on lysine by the viral-encoded procollagen-lysine,2-oxoglutarate 5-dioxygenase.

The protein localises to the virion. Its function is as follows. May participate in the formation of a layer of cross-linked glycosylated fibrils at the viral surface thus giving it a hairy-like appearance. This chain is Collagen-like protein 2, found in Acanthamoeba polyphaga (Amoeba).